The primary structure comprises 156 residues: Cyanate hydratase (156 aa).

Residues arginine 96, glutamate 99, and serine 122 contribute to the active site.

Belongs to the cyanase family.

It catalyses the reaction cyanate + hydrogencarbonate + 3 H(+) = NH4(+) + 2 CO2. Catalyzes the reaction of cyanate with bicarbonate to produce ammonia and carbon dioxide. The chain is Cyanate hydratase from Burkholderia orbicola (strain MC0-3).